Consider the following 196-residue polypeptide: Large ribosomal subunit protein uL18 (196 aa).

It belongs to the universal ribosomal protein uL18 family. As to quaternary structure, part of the 50S ribosomal subunit. Contacts the 5S and 23S rRNAs.

Functionally, this is one of the proteins that bind and probably mediate the attachment of the 5S RNA into the large ribosomal subunit, where it forms part of the central protuberance. The sequence is that of Large ribosomal subunit protein uL18 from Sulfurisphaera tokodaii (strain DSM 16993 / JCM 10545 / NBRC 100140 / 7) (Sulfolobus tokodaii).